The chain runs to 284 residues: 2-dehydro-3-deoxyphosphooctonate aldolase (284 aa).

This sequence belongs to the KdsA family.

It localises to the cytoplasm. The catalysed reaction is D-arabinose 5-phosphate + phosphoenolpyruvate + H2O = 3-deoxy-alpha-D-manno-2-octulosonate-8-phosphate + phosphate. Its pathway is carbohydrate biosynthesis; 3-deoxy-D-manno-octulosonate biosynthesis; 3-deoxy-D-manno-octulosonate from D-ribulose 5-phosphate: step 2/3. The protein operates within bacterial outer membrane biogenesis; lipopolysaccharide biosynthesis. The sequence is that of 2-dehydro-3-deoxyphosphooctonate aldolase from Serratia proteamaculans (strain 568).